Consider the following 122-residue polypeptide: Large ribosomal subunit protein uL14 (122 aa).

This sequence belongs to the universal ribosomal protein uL14 family. Part of the 50S ribosomal subunit. Forms a cluster with proteins L3 and L19. In the 70S ribosome, L14 and L19 interact and together make contacts with the 16S rRNA in bridges B5 and B8.

Its function is as follows. Binds to 23S rRNA. Forms part of two intersubunit bridges in the 70S ribosome. This is Large ribosomal subunit protein uL14 from Xanthomonas axonopodis pv. citri (strain 306).